The primary structure comprises 726 residues: Procollagen-lysine,2-oxoglutarate 5-dioxygenase 1 (726 aa).

The N-terminal stretch at 1 to 18 is a signal peptide; it reads MRLLLLLAPLGWLLLAET. Asn196 and Asn537 each carry an N-linked (GlcNAc...) asparagine glycan. The 92-residue stretch at 635–726 folds into the Fe2OG dioxygenase domain; that stretch reads QFDLAFVVRY…RYIAVSFVDP (92 aa). The Fe cation site is built by His655 and Asp657. N-linked (GlcNAc...) asparagine glycosylation is present at Asn685. His707 is a binding site for Fe cation. Residue Arg717 is part of the active site.

In terms of assembly, homodimer. Identified in a complex with P3H3 and P3H4. It depends on Fe(2+) as a cofactor. L-ascorbate serves as cofactor.

It is found in the rough endoplasmic reticulum membrane. It carries out the reaction L-lysyl-[collagen] + 2-oxoglutarate + O2 = (5R)-5-hydroxy-L-lysyl-[collagen] + succinate + CO2. Part of a complex composed of PLOD1, P3H3 and P3H4 that catalyzes hydroxylation of lysine residues in collagen alpha chains and is required for normal assembly and cross-linkling of collagen fibrils. Forms hydroxylysine residues in -Xaa-Lys-Gly- sequences in collagens. These hydroxylysines serve as sites of attachment for carbohydrate units and are essential for the stability of the intermolecular collagen cross-links. In Bos taurus (Bovine), this protein is Procollagen-lysine,2-oxoglutarate 5-dioxygenase 1 (PLOD1).